Consider the following 744-residue polypeptide: MEQTYQYGWIIPFLPLPVPMLIGLGLLLFPTATKSLRRMWAFQSVLLLSIVMIFSMNLSIQQINSSSVYQYVWSWIINNDFSLEFGYLIDPLTSIMSILITTVGIMVLSYSDNYMSHDHGYLRFFAYMSFFSTSMLGLVTSSNLIQIYIFWELVGMCSYLLIGFWFTRPLAANACQKAFVTNRVGDFGLLLGILGIYWITGSFEFRDLFQIFNSLISNNEVNFLFVTFCALLLFTGAIAKSAQFPLHVWLPDAMEGPTPISALIHAATMVAAGIFLIARLLPLFIVIPHIMNFISLIGIITLFLGATLALAQKDIKRGLAYSTMSQLGYMVLALGMGSYRSALFHLITHAYSKALLFLGSGSVIHSMETLVGYSPQKSQNMGLMGGLTKHVPITKTAFLLGTLSLCGIPPLACFWSKDEILNDSWLYSPIFAIIAWSTAGLTAFYMCRIYLLSFEGHLNAHFQNYSGKKNTPLSSIYIWGKEASEISKKNFCELILLKMKRTECPSFFSKKGCKLDEKVRNMIQPFLSISYLGNNKTYFYPYESDNTMLFPILILGLFTLFIGFLGIPSNHEGVDLDILSKWLTPSINLLHQNTNTSLDLYEFSKDSIFSVSIASLGIFIAFFLYKPVYSSFQILDLINLFVKRGPKRIFSDKIKKGIYDWSSNRAYIDPFYTTFLTVGMRKLAELTHFFDRRIIDGIPNGVGLMIFFVAEGIKSLGGGRISSYLFFYLSHLSFFLLIYYFLNF.

16 helical membrane-spanning segments follow: residues 9 to 29 (WIIP…LLLF), 40 to 60 (WAFQ…NLSI), 88 to 108 (LIDP…IMVL), 125 to 145 (FAYM…SNLI), 147 to 167 (IYIF…FWFT), 185 to 205 (GDFG…SFEF), 219 to 239 (NEVN…GAIA), 258 to 278 (TPIS…FLIA), 290 to 312 (IMNF…ALAQ), 327 to 347 (LGYM…FHLI), 354 to 374 (ALLF…VGYS), 396 to 416 (TAFL…CFWS), 425 to 445 (WLYS…TAFY), 548 to 568 (MLFP…LGIP), 608 to 628 (IFSV…YKPV), and 724 to 744 (YLFF…FLNF).

It belongs to the complex I subunit 5 family. NDH is composed of at least 16 different subunits, 5 of which are encoded in the nucleus.

The protein localises to the plastid. Its subcellular location is the chloroplast thylakoid membrane. It carries out the reaction a plastoquinone + NADH + (n+1) H(+)(in) = a plastoquinol + NAD(+) + n H(+)(out). It catalyses the reaction a plastoquinone + NADPH + (n+1) H(+)(in) = a plastoquinol + NADP(+) + n H(+)(out). Its function is as follows. NDH shuttles electrons from NAD(P)H:plastoquinone, via FMN and iron-sulfur (Fe-S) centers, to quinones in the photosynthetic chain and possibly in a chloroplast respiratory chain. The immediate electron acceptor for the enzyme in this species is believed to be plastoquinone. Couples the redox reaction to proton translocation, and thus conserves the redox energy in a proton gradient. The polypeptide is NAD(P)H-quinone oxidoreductase subunit 5, chloroplastic (ndhF) (Dampiera diversifolia (Blue dampiera)).